The sequence spans 183 residues: Ribulose bisphosphate carboxylase small subunit, chloroplastic 3 (183 aa).

Residues 1–43 (MATTMLNRSVIVNKEVAKTPNFPRATKNNKGFASNAAVQKCRD) constitute a chloroplast transit peptide.

Belongs to the RuBisCO small chain family. In terms of assembly, heterohexadecamer of 8 large and 8 small subunits.

It localises to the plastid. Its subcellular location is the chloroplast. Functionally, ruBisCO catalyzes two reactions: the carboxylation of D-ribulose 1,5-bisphosphate, the primary event in carbon dioxide fixation, as well as the oxidative fragmentation of the pentose substrate. Both reactions occur simultaneously and in competition at the same active site. Although the small subunit is not catalytic it is essential for maximal activity. This is Ribulose bisphosphate carboxylase small subunit, chloroplastic 3 from Acetabularia peniculus (Green alga).